The following is a 356-amino-acid chain: Thrombomodulin (356 aa).

Topologically, residues 1–296 are extracellular; sequence RGARGETEGR…SPAPAGPLHS (296 aa). EGF-like domains lie at 17-57 and 60-98; these read GAWA…RSCG and AEHP…HRCE. Cystine bridges form between C21/C32, C28/C41, C43/C56, C64/C72, C68/C82, C84/C97, C103/C114, C110/C123, C125/C136, C143/C152, C148/C162, C164/C178, C182/C191, C187/C199, C201/C213, C219/C228, C224/C237, and C239/C253. An EGF-like 3; calcium-binding domain is found at 99–137; that stretch reads DVDDCAQLPSPCPQRCVNTEGGFQCHCDTGYELVDGECV. EGF-like domains lie at 139–179 and 178–214; these read PVDP…HKCQ and CQMF…STCT. Positions 215 to 254 constitute an EGF-like 6; calcium-binding domain; it reads DINECDTNICPGQCHNLPGTYECICGPDSALSGQIGIDCD. A disordered region spans residues 255–290; the sequence is PTQVNEERGTPEDYGGSGEPPVSPTPGATARPSPAP. O-linked (Xyl...) (chondroitin sulfate) serine glycosylation is present at S271. Residues 297 to 320 form a helical membrane-spanning segment; the sequence is GVLVGISIASLSLVVALLALLCHL. Residues 321-356 are Cytoplasmic-facing; it reads RKKQGASRGELEYKCGVPAKELMLQQVKTERTPQKL.

In terms of assembly, interacts with ITGAL, ITGAM and ITGB2. Interacts with thrombin/F2; this interaction switches the specificity of thrombin from a procoagulant to an anticoagulant and antifibrinolytic protease. Interacts with ANGP1 and ANGP2; these interactions significantly inhibit the generation of activated PC and TAFIa/CPB2 by the thrombin/thrombomodulin complex. Interacts with PF4; this interaction enhances generation of activated protein C. Interacts with HMGB1; this interaction inhibits HMGB1 inflammatory activity. In terms of tissue distribution, endothelial cells are unique in synthesizing thrombomodulin.

The protein resides in the membrane. Endothelial cell receptor that plays a critical role in regulating several physiological processes including hemostasis, coagulation, fibrinolysis, inflammation, and angiogenesis. Acts as a cofactor for thrombin activation of protein C/PROC on the surface of vascular endothelial cells leading to initiation of the activated protein C anticoagulant pathway. Also accelerates the activation of the plasma carboxypeptidase B2/CPB2, which catalyzes removal of C-terminal basic amino acids from its substrates including kinins or anaphylatoxins leading to fibrinolysis inhibition. Plays critical protective roles in changing the cleavage specificity of protease-activated receptor 1/PAR1, inhibiting endothelial cell permeability and inflammation. Suppresses inflammation distinctly from its anticoagulant cofactor activity by sequestering HMGB1 thereby preventing it from engaging cellular receptors such as RAGE and contributing to the inflammatory response. In Bos taurus (Bovine), this protein is Thrombomodulin (THBD).